Here is a 165-residue protein sequence, read N- to C-terminus: Choriogonadotropin subunit beta (165 aa).

Residues 1-20 form the signal peptide; the sequence is METLQGLLLWLLLSMGGAQA. 6 disulfide bridges follow: Cys29-Cys77, Cys43-Cys92, Cys46-Cys130, Cys54-Cys108, Cys58-Cys110, and Cys113-Cys120. Residues Asn33 and Asn50 are each glycosylated (N-linked (GlcNAc...) asparagine). The segment at 131–165 is disordered; sequence DDPNLQASSSSKDPPPSPPSPSRLLEPAGTPFLPQ. Residues Ser141, Ser147, and Ser152 are each glycosylated (O-linked (GalNAc...) serine).

This sequence belongs to the glycoprotein hormones subunit beta family. As to quaternary structure, heterodimer of a common alpha chain and a unique beta chain which confers biological specificity to thyrotropin, lutropin, follitropin and gonadotropin. In terms of tissue distribution, placenta.

It is found in the secreted. In terms of biological role, stimulates the ovaries to synthesize the steroids that are essential for the maintenance of pregnancy. This is Choriogonadotropin subunit beta (CGB) from Papio anubis (Olive baboon).